The sequence spans 74 residues: MDIVSLKFIGVGLMAIGMYGAALGVSNIFSSLLNAIARNPAAAENLQRMALIGAGLAEAIGLFSFVIAMLLIFS.

Helical transmembrane passes span Phe-8–Ile-28 and Ile-52–Ile-72.

Belongs to the ATPase C chain family. As to quaternary structure, F-type ATPases have 2 components, F(1) - the catalytic core - and F(0) - the membrane proton channel. F(1) has five subunits: alpha(3), beta(3), gamma(1), delta(1), epsilon(1). F(0) has three main subunits: a(1), b(2) and c(10-14). The alpha and beta chains form an alternating ring which encloses part of the gamma chain. F(1) is attached to F(0) by a central stalk formed by the gamma and epsilon chains, while a peripheral stalk is formed by the delta and b chains.

The protein localises to the cell inner membrane. In terms of biological role, f(1)F(0) ATP synthase produces ATP from ADP in the presence of a proton or sodium gradient. F-type ATPases consist of two structural domains, F(1) containing the extramembraneous catalytic core and F(0) containing the membrane proton channel, linked together by a central stalk and a peripheral stalk. During catalysis, ATP synthesis in the catalytic domain of F(1) is coupled via a rotary mechanism of the central stalk subunits to proton translocation. Key component of the F(0) channel; it plays a direct role in translocation across the membrane. A homomeric c-ring of between 10-14 subunits forms the central stalk rotor element with the F(1) delta and epsilon subunits. The sequence is that of ATP synthase subunit c from Rickettsia canadensis (strain McKiel).